The primary structure comprises 77 residues: PTS system N-acetylglucosamine-specific EIIB component (77 aa).

The PTS EIIB type-1 domain occupies 2–77 (ASKAEKIVAG…PIAAEIEDMM (76 aa)). The Phosphocysteine intermediate; for EIIB activity role is filled by Cys24.

It catalyses the reaction N(pros)-phospho-L-histidyl-[protein] + N-acetyl-D-glucosamine(out) = N-acetyl-D-glucosamine 6-phosphate(in) + L-histidyl-[protein]. The phosphoenolpyruvate-dependent sugar phosphotransferase system (sugar PTS), a major carbohydrate active transport system, catalyzes the phosphorylation of incoming sugar substrates concomitantly with their translocation across the cell membrane. This system is involved in N-acetylglucosamine (GlcNAc) transport. The protein is PTS system N-acetylglucosamine-specific EIIB component of Streptomyces coelicolor (strain ATCC BAA-471 / A3(2) / M145).